The chain runs to 417 residues: Equilibrative nucleotide transporter 2 (417 aa).

Helical transmembrane passes span 20–40 (AVCWLLGVGCLLAWNSMLTIV), 52–72 (PSRILTIIYQSFSIGALSVLV), 85–105 (LFGYSLFSLGSLAVLVLNLAT), 109–129 (GGIGSFIGVCVISAAFGLADA), 144–164 (PEFLQSFLAGLAASGALTSGL), 185–205 (LFFAMSASFELVCVLLYAYVF), 265–285 (LAVTLFLVYLLTFSIFPGFLS), 292–312 (SLGDWYALVLIAVFNVSDLVG), 328–348 (CLLITSLGRLLLIPAFNITGI), 354–374 (WMIFLMSVLGLSNGYLTVCVI), and 393–413 (LVLYICGGMFAGVACDWLWLV).

The protein belongs to the SLC29A/ENT transporter (TC 2.A.57) family. As to expression, expressed in leaves and flowers.

It localises to the cell membrane. May be involved in nucleoside transport. The polypeptide is Equilibrative nucleotide transporter 2 (ENT2) (Arabidopsis thaliana (Mouse-ear cress)).